A 216-amino-acid chain; its full sequence is Peptide methionine sulfoxide reductase MsrA (216 aa).

Residue C57 is part of the active site.

Belongs to the MsrA Met sulfoxide reductase family.

The enzyme catalyses L-methionyl-[protein] + [thioredoxin]-disulfide + H2O = L-methionyl-(S)-S-oxide-[protein] + [thioredoxin]-dithiol. The catalysed reaction is [thioredoxin]-disulfide + L-methionine + H2O = L-methionine (S)-S-oxide + [thioredoxin]-dithiol. Functionally, has an important function as a repair enzyme for proteins that have been inactivated by oxidation. Catalyzes the reversible oxidation-reduction of methionine sulfoxide in proteins to methionine. This chain is Peptide methionine sulfoxide reductase MsrA, found in Agrobacterium fabrum (strain C58 / ATCC 33970) (Agrobacterium tumefaciens (strain C58)).